The primary structure comprises 749 residues: Amyloid-beta A4 precursor protein-binding family A member 2 (749 aa).

Disordered regions lie at residues 1–94 (MAHR…PEEE), 130–220 (DTDE…GDLE), and 238–344 (SMTS…NIPE). Phosphoserine is present on Ser-11. Residues 70–80 (GDSSSDYVNNT) are compositionally biased toward polar residues. Acidic residues-rich tracts occupy residues 81–94 (SEEE…PEEE) and 131–142 (TDECQEAVEEWT). The interval 185-270 (HYCASKEGYQ…SVEACPPIKA (86 aa)) is STXBP1-binding. A Phosphoserine modification is found at Ser-208. A compositionally biased stretch (polar residues) spans 238 to 247 (SMTSITSASE). The span at 305-315 (RTPEERLKWPH) shows a compositional bias: basic and acidic residues. One can recognise a PID domain in the interval 368-555 (DGIIFAANYL…IINTQEMYND (188 aa)). PDZ domains lie at 568-654 (ELQL…IVSC) and 659-734 (TVLI…TMPA).

Part of a multimeric complex containing STXBP1 and syntaxin-1. Binds to the cytoplasmic domain of amyloid-beta protein, and to the nuclear factor NF-kappa-B/p65 via its PDZ domain. Interacts with the N-terminal domain of NECAB3. As to expression, brain.

Putative function in synaptic vesicle exocytosis by binding to STXBP1, an essential component of the synaptic vesicle exocytotic machinery. May modulate processing of the amyloid-beta precursor protein (APP) and hence formation of APP-beta. This is Amyloid-beta A4 precursor protein-binding family A member 2 (APBA2) from Homo sapiens (Human).